The sequence spans 36 residues: Photosystem I reaction center subunit VIII (36 aa).

A helical membrane pass occupies residues 6-28 (LPSIFVPLVGLLFPAIAMVSLFF).

Belongs to the PsaI family.

The protein localises to the plastid. The protein resides in the chloroplast thylakoid membrane. Its function is as follows. May help in the organization of the PsaL subunit. In Nymphaea alba (White water-lily), this protein is Photosystem I reaction center subunit VIII.